The following is a 300-amino-acid chain: Formylmethanofuran--tetrahydromethanopterin formyltransferase-like protein (300 aa).

The protein belongs to the FTR family.

The protein is Formylmethanofuran--tetrahydromethanopterin formyltransferase-like protein of Methanopyrus kandleri (strain AV19 / DSM 6324 / JCM 9639 / NBRC 100938).